Consider the following 873-residue polypeptide: Protein SEY1 (873 aa).

A disordered region spans residues 1 to 21 (MVANGHFAGSADGQDSSSYEH). Residues 1–749 (MVANGHFAGS…KRSAIGGITQ (749 aa)) lie on the Cytoplasmic side of the membrane. In terms of domain architecture, GB1/RHD3-type G spans 49-307 (GFNYHLISVF…IPADGFAVYA (259 aa)). 59–66 (GSQSTGKS) serves as a coordination point for GTP. The stretch at 482-506 (SNYQQELSLYQKDLERTSGQLRRDE) forms a coiled coil. Residues 676–703 (LDKWIGHTPSSATPADEEDLTPIGGVDD) are disordered. Over residues 690–703 (ADEEDLTPIGGVDD) the composition is skewed to acidic residues. A helical transmembrane segment spans residues 750–770 (VPLYFYGLLFALGWNEILAVL). Residues 771-773 (RNP) are Lumenal-facing. A helical transmembrane segment spans residues 774 to 794 (VYFLLLFVCAIGAYITYQLNL). Residues 795-873 (WGPIIKMTEA…EDVDDDDDDF (79 aa)) lie on the Cytoplasmic side of the membrane. Residues 828-873 (RQAMAMSGARNATEEHEMSRLSRKPAERGGRKNRADEDVDDDDDDF) are disordered. Positions 839-863 (ATEEHEMSRLSRKPAERGGRKNRAD) are enriched in basic and acidic residues. A compositionally biased stretch (acidic residues) spans 864-873 (EDVDDDDDDF).

It belongs to the TRAFAC class dynamin-like GTPase superfamily. GB1/RHD3 GTPase family. RHD3 subfamily.

The protein resides in the endoplasmic reticulum membrane. Functionally, cooperates with the reticulon proteins and tubule-shaping DP1 family proteins to generate and maintain the structure of the tubular endoplasmic reticulum network. Has GTPase activity, which is required for its function in ER organization. In Ajellomyces capsulatus (strain G186AR / H82 / ATCC MYA-2454 / RMSCC 2432) (Darling's disease fungus), this protein is Protein SEY1.